The sequence spans 252 residues: Phosphate import ATP-binding protein PstB (252 aa).

Residues 5-247 enclose the ABC transporter domain; that stretch reads MRGQDVKVFY…PKEQRTQDYI (243 aa). ATP is bound at residue 37–44; the sequence is GPSGCGKS.

It belongs to the ABC transporter superfamily. Phosphate importer (TC 3.A.1.7) family. The complex is composed of two ATP-binding proteins (PstB), two transmembrane proteins (PstC and PstA) and a solute-binding protein (PstS).

The protein localises to the cell inner membrane. The enzyme catalyses phosphate(out) + ATP + H2O = ADP + 2 phosphate(in) + H(+). Functionally, part of the ABC transporter complex PstSACB involved in phosphate import. Responsible for energy coupling to the transport system. In Bartonella henselae (strain ATCC 49882 / DSM 28221 / CCUG 30454 / Houston 1) (Rochalimaea henselae), this protein is Phosphate import ATP-binding protein PstB.